Consider the following 193-residue polypeptide: Cytochrome c biogenesis ATP-binding export protein CcmA (193 aa).

Residues 9-191 (LSASGLAILR…AAGFPVTAEV (183 aa)) enclose the ABC transporter domain. Residue 41 to 48 (GANGAGKT) participates in ATP binding.

It belongs to the ABC transporter superfamily. CcmA exporter (TC 3.A.1.107) family. In terms of assembly, the complex is composed of two ATP-binding proteins (CcmA) and two transmembrane proteins (CcmB).

The protein localises to the cell inner membrane. It catalyses the reaction heme b(in) + ATP + H2O = heme b(out) + ADP + phosphate + H(+). Part of the ABC transporter complex CcmAB involved in the biogenesis of c-type cytochromes; once thought to export heme, this seems not to be the case, but its exact role is uncertain. Responsible for energy coupling to the transport system. The polypeptide is Cytochrome c biogenesis ATP-binding export protein CcmA (Hyphomonas neptunium (strain ATCC 15444)).